A 295-amino-acid chain; its full sequence is MSFEAWIIATGVLVGVSCGLIGTFLVLRSMAMLADAISHTVLLGIVGAFLVTGSLDGIYMFIGAAATGLLTAFLVQLLHSKGVQSDAAIGVVFTSLFAIGVILLSVYGANVHLDIEHSLMGEIAFVPWNTVTVFGVDIGPKAFWMLASVLVLNVVLISVCYKEFKIASFDPQMALALGIPVLLIHYVQMGMLSLTTVASFDSVGAVLVVAMLIVPPAAAHLLTDRLLYMLILSALIGGLSAVMGYFFATWLNVSISGAMAAMTGVCYASAFLFSPANGVITKKLRTLNMQKERAG.

The next 9 membrane-spanning stretches (helical) occupy residues 7-27 (IIAT…FLVL), 42-62 (LLGI…YMFI), 63-83 (GAAA…SKGV), 87-107 (AAIG…LSVY), 138-158 (IGPK…VLIS), 174-194 (ALAL…MLSL), 203-223 (VGAV…HLLT), 227-247 (LYML…GYFF), and 253-273 (VSIS…AFLF).

It belongs to the ABC-3 integral membrane protein family. In terms of assembly, the complex is probably composed of two ATP-binding proteins (MntB), two transmembrane proteins (MntC and MntD) and a solute-binding protein (MntA).

The protein resides in the cell membrane. Functionally, probably part of the ABC transporter complex MntABCD involved in manganese import. Probably responsible for the translocation of the substrate across the membrane. The sequence is that of Manganese transport system membrane protein MntD from Bacillus subtilis (strain 168).